Consider the following 589-residue polypeptide: Transmembrane 9 superfamily member 1 (589 aa).

The N-terminal stretch at 1–24 (MPSSSSAAVLVFLLLVSLLTPTFA) is a signal peptide. At 25-222 (SDSDHKYQAE…YPFFEHQIHW (198 aa)) the chain is on the lumenal side. A helical membrane pass occupies residues 223 to 243 (FSIFNSFMMVIFLTGLVSMIL). Over 244–293 (MRTLRNDYAKYAREDDDLESLERDVSEESGWKLVHGDVFRPASSLVLLSA) the chain is Cytoplasmic. Residues 294-314 (VVGTGAQLALLVLLVILMAIV) form a helical membrane-spanning segment. Residues 315–321 (GTLYVGR) are Lumenal-facing. The chain crosses the membrane as a helical span at residues 322 to 342 (GAIVTTFIVCYALTSFVSGYV). The Cytoplasmic portion of the chain corresponds to 343–364 (SGGMYSRSGGKHWIKCMVLTAS). A helical membrane pass occupies residues 365-385 (LFPFLCFGIGFLLNTIAIFYG). At 386-395 (SLAAIPFGTM) the chain is on the lumenal side. A helical membrane pass occupies residues 396 to 416 (VVVFVIWGFISFPLALLGTVV). Residues 417 to 448 (GRNWSGAPNNPCRVKTIPRPIPEKKWYLTPSV) lie on the Cytoplasmic side of the membrane. A helical transmembrane segment spans residues 449-469 (VSLMGGLLPFGSIFIEMYFVF). At 470-481 (TSFWNYKVYYVY) the chain is on the lumenal side. The helical transmembrane segment at 482-502 (GFMLLVFVILVIVTVCVTIVG) threads the bilayer. The Cytoplasmic portion of the chain corresponds to 503–518 (TYFLLNAENYHWQWTS). A helical transmembrane segment spans residues 519-539 (FFSAASTAVYVYLYSIYYYYV). The Lumenal portion of the chain corresponds to 540 to 550 (KTKMSGFFQTS). A helical transmembrane segment spans residues 551-571 (FYFGYTMMFCLGLGILCGAVG). Residues 572–589 (YLGSNLFVRRIYRNIKCD) are Cytoplasmic-facing. The Endoplasmic reticulum export signal motif lies at 578–583 (FVRRIY). The short motif at 587-589 (KCD) is the Golgi retention signal element.

It belongs to the nonaspanin (TM9SF) (TC 9.A.2) family. In terms of tissue distribution, ubiquitous.

The protein localises to the endosome membrane. Its subcellular location is the golgi apparatus membrane. The protein is Transmembrane 9 superfamily member 1 of Arabidopsis thaliana (Mouse-ear cress).